Reading from the N-terminus, the 984-residue chain is Putative formate dehydrogenase SAUSA300_2258 (984 aa).

The region spanning 3–79 (EHLVVTLDGK…PMTVNTVNND (77 aa)) is the 2Fe-2S ferredoxin-type domain. [2Fe-2S] cluster-binding residues include Cys37, Cys48, Cys51, and Cys63. In terms of domain architecture, 4Fe-4S His(Cys)3-ligated-type spans 79–119 (DVKDAQKEALDRILEKHMLYCTVCDYNNGDCEIHNTMDAWG). His95, Cys99, Cys102, Cys109, Cys147, Cys150, Cys153, Cys157, Cys190, Cys193, Cys196, Cys200, Cys264, Cys267, Cys271, and Cys299 together coordinate [4Fe-4S] cluster. 2 consecutive 4Fe-4S ferredoxin-type domains span residues 138–165 (PFYR…VNET) and 181–211 (NDVP…VNME). The tract at residues 252–984 (MRKERIKKTK…YVFPGNQVDK (733 aa)) is formate dehydrogenase. A 4Fe-4S Mo/W bis-MGD-type domain is found at 257–313 (IKKTKTVCTYCGVGCSFEVWTKDREILKVQPSHDSPANKIATCVKGKFSWGHINSDQ).

It in the C-terminal section; belongs to the prokaryotic molybdopterin-containing oxidoreductase family. Requires [2Fe-2S] cluster as cofactor. It depends on [4Fe-4S] cluster as a cofactor. Mo-bis(molybdopterin guanine dinucleotide) serves as cofactor.

The catalysed reaction is formate + NAD(+) = CO2 + NADH. This chain is Putative formate dehydrogenase SAUSA300_2258, found in Staphylococcus aureus (strain USA300).